The following is a 318-amino-acid chain: Nucleotide-binding protein Lcho_3490 (318 aa).

Residue 35 to 42 coordinates ATP; sequence GISGGGKS. 84 to 87 contributes to the GTP binding site; the sequence is DVRN.

It belongs to the RapZ-like family.

Its function is as follows. Displays ATPase and GTPase activities. The polypeptide is Nucleotide-binding protein Lcho_3490 (Leptothrix cholodnii (strain ATCC 51168 / LMG 8142 / SP-6) (Leptothrix discophora (strain SP-6))).